The following is a 649-amino-acid chain: DNA mismatch repair protein MutL (649 aa).

The protein belongs to the DNA mismatch repair MutL/HexB family.

Functionally, this protein is involved in the repair of mismatches in DNA. It is required for dam-dependent methyl-directed DNA mismatch repair. May act as a 'molecular matchmaker', a protein that promotes the formation of a stable complex between two or more DNA-binding proteins in an ATP-dependent manner without itself being part of a final effector complex. This Streptococcus pneumoniae (strain P1031) protein is DNA mismatch repair protein MutL.